A 452-amino-acid chain; its full sequence is Bifunctional protein GlmU (452 aa).

The pyrophosphorylase stretch occupies residues M1–R232. UDP-N-acetyl-alpha-D-glucosamine contacts are provided by residues L11 to G14, K25, Q78, and G83 to T84. A Mg(2+)-binding site is contributed by D108. 3 residues coordinate UDP-N-acetyl-alpha-D-glucosamine: G144, E158, and N230. N230 is a binding site for Mg(2+). Residues A233–G253 are linker. The interval G254 to E452 is N-acetyltransferase. Positions 319 and 337 each coordinate UDP-N-acetyl-alpha-D-glucosamine. The Proton acceptor role is filled by H349. Positions 352 and 363 each coordinate UDP-N-acetyl-alpha-D-glucosamine. Acetyl-CoA contacts are provided by residues A366, N372–Y373, S391, S409, and R426.

This sequence in the N-terminal section; belongs to the N-acetylglucosamine-1-phosphate uridyltransferase family. The protein in the C-terminal section; belongs to the transferase hexapeptide repeat family. As to quaternary structure, homotrimer. Mg(2+) serves as cofactor.

The protein localises to the cytoplasm. It catalyses the reaction alpha-D-glucosamine 1-phosphate + acetyl-CoA = N-acetyl-alpha-D-glucosamine 1-phosphate + CoA + H(+). The catalysed reaction is N-acetyl-alpha-D-glucosamine 1-phosphate + UTP + H(+) = UDP-N-acetyl-alpha-D-glucosamine + diphosphate. It participates in nucleotide-sugar biosynthesis; UDP-N-acetyl-alpha-D-glucosamine biosynthesis; N-acetyl-alpha-D-glucosamine 1-phosphate from alpha-D-glucosamine 6-phosphate (route II): step 2/2. Its pathway is nucleotide-sugar biosynthesis; UDP-N-acetyl-alpha-D-glucosamine biosynthesis; UDP-N-acetyl-alpha-D-glucosamine from N-acetyl-alpha-D-glucosamine 1-phosphate: step 1/1. The protein operates within bacterial outer membrane biogenesis; LPS lipid A biosynthesis. Catalyzes the last two sequential reactions in the de novo biosynthetic pathway for UDP-N-acetylglucosamine (UDP-GlcNAc). The C-terminal domain catalyzes the transfer of acetyl group from acetyl coenzyme A to glucosamine-1-phosphate (GlcN-1-P) to produce N-acetylglucosamine-1-phosphate (GlcNAc-1-P), which is converted into UDP-GlcNAc by the transfer of uridine 5-monophosphate (from uridine 5-triphosphate), a reaction catalyzed by the N-terminal domain. In Parvibaculum lavamentivorans (strain DS-1 / DSM 13023 / NCIMB 13966), this protein is Bifunctional protein GlmU.